The sequence spans 823 residues: Hypoxia-inducible factor 1-alpha (823 aa).

The segment at 1–30 is disordered; it reads MEGAGGANDKKKISSERRKEKSRDAARSRR. The interaction with TSGA10 stretch occupies residues 1–401; the sequence is MEGAGGANDK…KEPDALTLLA (401 aa). The segment covering 8 to 30 has biased composition (basic and acidic residues); the sequence is NDKKKISSERRKEKSRDAARSRR. The 54-residue stretch at 17 to 70 folds into the bHLH domain; it reads RRKEKSRDAARSRRSKESEVFYELAHQLPLPHNVSSHLDKASVMRLTISYLRVR. Residues 21–30 form a DNA-binding region; it reads KSRDAARSRR. The PAS 1 domain maps to 85–158; it reads KAQMNCFYLK…THRNGLVKKG (74 aa). The required for heterodimer formation with ARNT stretch occupies residues 170–191; sequence RMKCTLTSRGRTMNIKSATWKV. The PAS 2 domain maps to 228–298; it reads PHPSNIEIPL…KTHHDMFTKG (71 aa). The residue at position 247 (S247) is a Phosphoserine; by CK1. Positions 302-345 constitute a PAC domain; that stretch reads TGQYRMLAKRGGYVWIETQATVIYNTKNSQPQCIVCVNYVVSGI. The interval 401-600 is ODD; that stretch reads APAAGDTIIS…QSASTNTVFQ (200 aa). P402 bears the 4-hydroxyproline mark. Residues 494–517 show a composition bias toward polar residues; it reads IQDQPASPSDGSTRQSSPEPNSPS. Positions 494–521 are disordered; it reads IQDQPASPSDGSTRQSSPEPNSPSEYCF. The interval 531-575 is NTAD; it reads FKLELVEKLFAEDTEAKNPFSTQDTDLDLEMLAPYIPMDDDFQLR. N6-acetyllysine; alternate is present on K532. K532 is covalently cross-linked (Glycyl lysine isopeptide (Lys-Gly) (interchain with G-Cter in ubiquitin); alternate). Glycyl lysine isopeptide (Lys-Gly) (interchain with G-Cter in ubiquitin) cross-links involve residues K538 and K547. S551 carries the phosphoserine; by GSK3-beta modification. T555 carries the phosphothreonine; by GSK3-beta modification. At P564 the chain carries 4-hydroxyproline. S576 carries the post-translational modification Phosphoserine; by PLK3. Residues 576-782 form an ID region; that stretch reads SFDQLSPLEN…SDLACRLLGQ (207 aa). Disordered stretches follow at residues 581–602 and 639–685; these read SPLENSSTSPQSASTNTVFQPT and PSPP…PRSP. Phosphoserine; by GSK3-beta is present on S589. Residues 651-666 are compositionally biased toward polar residues; that stretch reads ATTSPYSDTGSRTASP. S654 is modified (phosphoserine; by PLK3). N6-acetyllysine is present on K706. A Nuclear localization signal motif is present at residues 715-721; it reads RKRKIEH. Residues 783 to 823 form a CTAD region; it reads SMDESGLPQLTSYDCEVNAPIQGSRNLLQGEELLRALDQVN. The residue at position 797 (C797) is an S-nitrosocysteine. N800 is modified ((3S)-3-hydroxyasparagine).

In terms of assembly, interacts with the ARNT; forms a heterodimer that binds core DNA sequence 5'-TACGTG-3' within the hypoxia response element (HRE) of target gene promoters. Interacts with COPS5; the interaction increases the transcriptional activity of HIF1A through increased stability. Interacts with EP300 (via TAZ-type 1 domains); the interaction is stimulated in response to hypoxia and inhibited by CITED2. Interacts with CREBBP (via TAZ-type 1 domains). Interacts with NCOA1, NCOA2, APEX1 and HSP90. Interacts (hydroxylated within the ODD domain) with VHLL (via beta domain); the interaction, leads to polyubiquitination and subsequent HIF1A proteasomal degradation. During hypoxia, sumoylated HIF1A also binds VHL; the interaction promotes the ubiquitination of HIF1A. Interacts with SENP1; the interaction desumoylates HIF1A resulting in stabilization and activation of transcription. Interacts (via the ODD domain) with NAA10; the interaction appears not to acetylate HIF1A nor have any affect on protein stability, during hypoxia. Interacts with RWDD3; the interaction enhances HIF1A sumoylation. Interacts with TSGA10. Interacts with HIF3A. Interacts with RORA (via the DNA binding domain); the interaction enhances HIF1A transcription under hypoxia through increasing protein stability. Interaction with PSMA7 inhibits the transactivation activity of HIF1A under both normoxic and hypoxia-mimicking conditions. Interacts with USP20. Interacts with RACK1; promotes HIF1A ubiquitination and proteasome-mediated degradation. Interacts (via N-terminus) with USP19. Interacts with SIRT2. Interacts (deacetylated form) with EGLN1. Interacts with CBFA2T3. Interacts with HSP90AA1 and HSP90AB1. Interacts with DCUN1D1; this interaction increases the interaction between VHL and DCUN1D1. Interacts with HIF1AN. In terms of processing, S-nitrosylation of Cys-797 may be responsible for increased recruitment of p300 coactivator necessary for transcriptional activity of HIF-1 complex. Post-translationally, acetylation of Lys-532 by ARD1 increases interaction with VHL and stimulates subsequent proteasomal degradation. Deacetylation of Lys-706 by SIRT2 increases its interaction with and hydroxylation by EGLN1 thereby inactivating HIF1A activity by inducing its proteasomal degradation. Ubiquitinated; in normoxia, following hydroxylation and interaction with VHL. Lys-532 appears to be the principal site of ubiquitination. Clioquinol, the Cu/Zn-chelator, inhibits ubiquitination through preventing hydroxylation at Asn-800. Ubiquitinated by E3 ligase VHL. Deubiquitinated by UCHL1. In terms of processing, requires phosphorylation for DNA-binding. Phosphorylation at Ser-247 by CSNK1D/CK1 represses kinase activity and impairs ARNT binding. Phosphorylation by GSK3-beta and PLK3 promote degradation by the proteasome. Post-translationally, the iron and 2-oxoglutarate dependent 3-hydroxylation of asparagine is (S) stereospecific within HIF CTAD domains. Sumoylated; with SUMO1 under hypoxia. Sumoylation is enhanced through interaction with RWDD3. Both sumoylation and desumoylation seem to be involved in the regulation of its stability during hypoxia. Sumoylation can promote either its stabilization or its VHL-dependent degradation by promoting hydroxyproline-independent HIF1A-VHL complex binding, thus leading to HIF1A ubiquitination and proteasomal degradation. Desumoylation by SENP1 increases its stability amd transcriptional activity. There is a disaccord between various publications on the effect of sumoylation and desumoylation on its stability and transcriptional activity. In terms of processing, in normoxia, is hydroxylated on Pro-402 and Pro-564 in the oxygen-dependent degradation domain (ODD) by EGLN1/PHD2 and EGLN2/PHD1. EGLN3/PHD3 has also been shown to hydroxylate Pro-564. The hydroxylated prolines promote interaction with VHL, initiating rapid ubiquitination and subsequent proteasomal degradation. Deubiquitinated by USP20. Under hypoxia, proline hydroxylation is impaired and ubiquitination is attenuated, resulting in stabilization. In normoxia, is hydroxylated on Asn-800 by HIF1AN, thus abrogating interaction with CREBBP and EP300 and preventing transcriptional activation. Repressed by iron ion, via Fe(2+) prolyl hydroxylase (PHD) enzymes-mediated hydroxylation and subsequent proteasomal degradation.

Its subcellular location is the cytoplasm. The protein localises to the nucleus. Its activity is regulated as follows. Induced by reactive oxygen species (ROS). Its function is as follows. Functions as a master transcriptional regulator of the adaptive response to hypoxia. Under hypoxic conditions, activates the transcription of over 40 genes, including erythropoietin, glucose transporters, glycolytic enzymes, vascular endothelial growth factor, HILPDA, and other genes whose protein products increase oxygen delivery or facilitate metabolic adaptation to hypoxia. Plays an essential role in embryonic vascularization, tumor angiogenesis and pathophysiology of ischemic disease. Heterodimerizes with ARNT; heterodimer binds to core DNA sequence 5'-TACGTG-3' within the hypoxia response element (HRE) of target gene promoters. Activation requires recruitment of transcriptional coactivators such as CREBBP and EP300. Activity is enhanced by interaction with NCOA1 and/or NCOA2. Interaction with redox regulatory protein APEX1 seems to activate CTAD and potentiates activation by NCOA1 and CREBBP. Involved in the axonal distribution and transport of mitochondria in neurons during hypoxia. The sequence is that of Hypoxia-inducible factor 1-alpha (HIF1A) from Bos taurus (Bovine).